A 1234-amino-acid chain; its full sequence is DNA-directed RNA polymerase subunit beta (1234 aa).

The interval 1189-1212 is disordered; sequence VLSSQDNDYEEPEENDEEDELNLD. Residues 1195-1212 are compositionally biased toward acidic residues; sequence NDYEEPEENDEEDELNLD.

This sequence belongs to the RNA polymerase beta chain family. In terms of assembly, the RNAP catalytic core consists of 2 alpha, 1 beta, 1 beta' and 1 omega subunit. When a sigma factor is associated with the core the holoenzyme is formed, which can initiate transcription.

The catalysed reaction is RNA(n) + a ribonucleoside 5'-triphosphate = RNA(n+1) + diphosphate. Functionally, DNA-dependent RNA polymerase catalyzes the transcription of DNA into RNA using the four ribonucleoside triphosphates as substrates. This Clostridium kluyveri (strain NBRC 12016) protein is DNA-directed RNA polymerase subunit beta.